The chain runs to 207 residues: Phosphoenolpyruvate guanylyltransferase (207 aa).

Phosphoenolpyruvate-binding residues include Thr-137, Gly-153, and Ser-156.

The protein belongs to the CofC family.

The enzyme catalyses phosphoenolpyruvate + GTP + H(+) = enolpyruvoyl-2-diphospho-5'-guanosine + diphosphate. It participates in cofactor biosynthesis; coenzyme F420 biosynthesis. Its function is as follows. Guanylyltransferase that catalyzes the activation of phosphoenolpyruvate (PEP) as enolpyruvoyl-2-diphospho-5'-guanosine, via the condensation of PEP with GTP. It is involved in the biosynthesis of coenzyme F420, a hydride carrier cofactor. The sequence is that of Phosphoenolpyruvate guanylyltransferase from Sphaerobacter thermophilus (strain ATCC 49802 / DSM 20745 / KCCM 41009 / NCIMB 13125 / S 6022).